We begin with the raw amino-acid sequence, 388 residues long: MAQREWVEKDFYKELGVSSDASPEEIKRAYRKLARYLHPDANPDNSAGERFKVVSEAHNVLSDPVKRKEYDETRRLFAGGWLGGRRFDSSFGDFGMGGDGAEFNLNDLFDAASRTGGTNIGDLFGGLFGRGASVRPSRPRRGNDLETEADLDFVEAAKGVAMPLRLTSPAPCTNCHGSGARPGISPKVCSTCNGSGVINRNQGAFGFSEPCTECRGSGSIIEHPCEECKGTGVTTRTRTINVRIPSGVEDGQRIRLAGQGEAGLRGAPSGDLYVTVHVRPDKIFGRNGDDLTVTIPVSFTELALGSTLSVPTLDGTVGVRVPKGTSDGRILRVRGRGVPKRSGGHGDLLVTVKVAVPLNLEGAAQKALEAYAAAERSSGFNPRAGWGR.

The region spanning 10 to 74 (DFYKELGVSS…VKRKEYDETR (65 aa)) is the J domain. A CR-type zinc finger spans residues 159 to 237 (GVAMPLRLTS…CKGTGVTTRT (79 aa)). Cys-172, Cys-175, Cys-189, Cys-192, Cys-211, Cys-214, Cys-225, and Cys-228 together coordinate Zn(2+). CXXCXGXG motif repeat units follow at residues 172–179 (CTNCHGSG), 189–196 (CSTCNGSG), 211–218 (CTECRGSG), and 225–232 (CEECKGTG).

This sequence belongs to the DnaJ family. In terms of assembly, homodimer. Zn(2+) is required as a cofactor.

The protein localises to the cytoplasm. Participates actively in the response to hyperosmotic and heat shock by preventing the aggregation of stress-denatured proteins and by disaggregating proteins, also in an autonomous, DnaK-independent fashion. Unfolded proteins bind initially to DnaJ; upon interaction with the DnaJ-bound protein, DnaK hydrolyzes its bound ATP, resulting in the formation of a stable complex. GrpE releases ADP from DnaK; ATP binding to DnaK triggers the release of the substrate protein, thus completing the reaction cycle. Several rounds of ATP-dependent interactions between DnaJ, DnaK and GrpE are required for fully efficient folding. Also involved, together with DnaK and GrpE, in the DNA replication of plasmids through activation of initiation proteins. This Mycobacterium leprae (strain TN) protein is Chaperone protein DnaJ 1.